Reading from the N-terminus, the 135-residue chain is Small ribosomal subunit protein bS16 (135 aa).

Basic and acidic residues predominate over residues 105 to 120 (DEKKKPVLKPKTEKAA). Residues 105–135 (DEKKKPVLKPKTEKAAPEAAAPEAEATEEQA) form a disordered region.

The protein belongs to the bacterial ribosomal protein bS16 family.

This chain is Small ribosomal subunit protein bS16, found in Clavibacter sepedonicus (Clavibacter michiganensis subsp. sepedonicus).